The primary structure comprises 179 residues: Arginine repressor (179 aa).

This sequence belongs to the ArgR family.

The protein localises to the cytoplasm. It participates in amino-acid biosynthesis; L-arginine biosynthesis [regulation]. Regulates arginine biosynthesis genes. The polypeptide is Arginine repressor (Renibacterium salmoninarum (strain ATCC 33209 / DSM 20767 / JCM 11484 / NBRC 15589 / NCIMB 2235)).